The sequence spans 381 residues: Creatine kinase B-type (381 aa).

Residue S4 is modified to Phosphoserine. One can recognise a Phosphagen kinase N-terminal domain in the interval 11-98 (KLRFPAEDEF…FDPIIEDRHG (88 aa)). Residue T35 is modified to Phosphothreonine. Residue K45 forms a Glycyl lysine isopeptide (Lys-Gly) (interchain with G-Cter in ubiquitin) linkage. V72 is a binding site for creatine. The segment covering 96–110 (RHGGYKPSDEHKTDL) has biased composition (basic and acidic residues). Residues 96–123 (RHGGYKPSDEHKTDLNPDNLQGGDDLDP) are disordered. Glycyl lysine isopeptide (Lys-Gly) (interchain with G-Cter in ubiquitin) cross-links involve residues K101 and K107. Y125 carries the phosphotyrosine modification. A Phosphagen kinase C-terminal domain is found at 125-367 (YVLSSRVRTG…KLLIEMEQRL (243 aa)). ATP-binding positions include 128-132 (SSRVR), R130, R132, and H191. The tract at residues 130-138 (RVRTGRSIR) is internal MTS-like signal. S199 bears the Phosphoserine mark. E232 provides a ligand contact to creatine. An ATP-binding site is contributed by R236. Position 269 is a 3'-nitrotyrosine (Y269). S285 contacts creatine. R292 lines the ATP pocket. The residue at position 309 (S309) is a Phosphoserine. ATP contacts are provided by residues R320, 320-325 (RGTGGV), and D335. A Phosphothreonine modification is found at T322. K381 is covalently cross-linked (Glycyl lysine isopeptide (Lys-Gly) (interchain with G-Cter in ubiquitin)).

This sequence belongs to the ATP:guanido phosphotransferase family. Dimer of identical or non-identical chains, which can be either B (brain type) or M (muscle type). With MM being the major form in skeletal muscle and myocardium, MB existing in myocardium, and BB existing in many tissues, especially brain. Interacts with SLC12A6 (via C-terminus); the interaction may be required for SLC12A6 potassium-chloride cotransport activity. Post-translationally, ubiquitinated by the ECS(ASB9) complex, leading to its degradation by the proteasome.

It is found in the cytoplasm. It localises to the cytosol. The protein resides in the mitochondrion. The protein localises to the cell membrane. The catalysed reaction is creatine + ATP = N-phosphocreatine + ADP + H(+). Functionally, reversibly catalyzes the transfer of phosphate between ATP and various phosphogens (e.g. creatine phosphate). Creatine kinase isoenzymes play a central role in energy transduction in tissues with large, fluctuating energy demands, such as skeletal muscle, heart, brain and spermatozoa. Acts as a key regulator of adaptive thermogenesis as part of the futile creatine cycle: localizes to the mitochondria of thermogenic fat cells and acts by mediating phosphorylation of creatine to initiate a futile cycle of creatine phosphorylation and dephosphorylation. During the futile creatine cycle, creatine and N-phosphocreatine are in a futile cycle, which dissipates the high energy charge of N-phosphocreatine as heat without performing any mechanical or chemical work. This Oryctolagus cuniculus (Rabbit) protein is Creatine kinase B-type (CKB).